The following is a 478-amino-acid chain: Protein ZINC INDUCED FACILITATOR-LIKE 1 (478 aa).

Helical transmembrane passes span 43–63 (IIVL…YFMI), 81–101 (FVGC…GLVA), 108–128 (PVIL…GLSL), 130–150 (FWMA…LGPI), 169–189 (AVST…GFLA), 208–228 (FPFF…TIVS), 280–300 (IIVY…FSLW), 317–337 (VGSV…SLYS), 346–367 (IIVT…PLIA), 378–398 (VTSA…GLFI), 415–435 (IAMT…GIIF), and 453–473 (VFFI…KPFL).

This sequence belongs to the major facilitator superfamily. Predominantly expressed in roots and stomatal guard cells. Detected in anther stamen filaments and shoot apical meristem. In the mature portion of roots, restricted to the cortex. At the root tip, highly expressed in both the cortical and epidermal cell layers of the apical meristem and the transition zone, while absent from the quiescent center or the columella cells. Not detected in lateral root primordia.

It is found in the cell membrane. The protein localises to the vacuole membrane. In terms of biological role, major facilitator superfamily (MFS) transporter probably involved in 2,4-dichlorophenoxyacetic acid (2,4-D) export. K(+) may be the physiological substrate of the transporter. Its function is as follows. Modulates root auxin-related processes. Involved in auxin efflux and acts as a positive regulator of shootward transport at the root apex. May mediate proton efflux from the vacuolar compartment. Functionally, mediates drought stress tolerance by regulating stomatal closure. The protein is Protein ZINC INDUCED FACILITATOR-LIKE 1 (ZIFL1) of Arabidopsis thaliana (Mouse-ear cress).